The following is an 839-amino-acid chain: V-type proton ATPase 116 kDa subunit a 1 (839 aa).

Topologically, residues 1-395 (MGELFRSEEM…DAYGIGTYRE (395 aa)) are cytoplasmic. Threonine 257 and threonine 367 each carry phosphothreonine. The residue at position 371 (tyrosine 371) is a Phosphotyrosine. Residues 396-414 (INPAPYTVITFPFLFAVMF) form a helical membrane-spanning segment. At 415-416 (GD) the chain is on the vacuolar side. Residues 417-433 (FGHGILMTLFAVWMVLR) form a helical membrane-spanning segment. The Cytoplasmic portion of the chain corresponds to 434 to 448 (ESRILSQKHENEMFS). Residues 449–478 (MVFSGRYIILLMGLFSIYTGLIYNDCFSKS) form a helical membrane-spanning segment. Topologically, residues 479–542 (LNIFGSSWSV…ATNKLTFLNS (64 aa)) are vacuolar. The chain crosses the membrane as a helical span at residues 543–562 (FKMKMSVILGIIHMLFGVSL). Residues 563 to 580 (SLFNHIYFKKPLNIYFGF) lie on the Cytoplasmic side of the membrane. Residues 581-601 (IPEIIFMSSLFGYLVILIFYK) traverse the membrane as a helical segment. The Vacuolar segment spans residues 602–646 (WTAYDAHSSRNAPSLLIHFINMFLFSYPESGNAMLYSGQKGIQCF). A helical membrane pass occupies residues 647–666 (LIVVAMLCVPWMLLFKPLIL). Residues 667–726 (RHQYLRKKHLGTLNFGGIRVGNGPTEEDAEIIQHDQLSTHSEDAEEFDFGDTMVHQAIHT) are Cytoplasmic-facing. The chain crosses the membrane as a helical span at residues 727-751 (IEYCLGCISNTASYLRLWALSLAHA). The Vacuolar segment spans residues 752–772 (QLSEVLWTMVIHIGLHVRSLA). A helical membrane pass occupies residues 773 to 811 (GGLGLFFIFAAFATLTVAILLIMEGLSAFLHALRLHWVE). Topologically, residues 812–839 (FQNKFYTGTGFKFLPFSFEHIREGKFDE) are cytoplasmic.

Belongs to the V-ATPase 116 kDa subunit family. V-ATPase is a heteromultimeric enzyme made up of two complexes: the ATP-hydrolytic V1 complex and the proton translocation V0 complex. The V1 complex consists of three catalytic AB heterodimers that form a heterohexamer, three peripheral stalks each consisting of EG heterodimers, one central rotor including subunits D and F, and the regulatory subunits C and H. The proton translocation complex V0 consists of the proton transport subunit a, a ring of proteolipid subunits c9c'', rotary subunit d, subunits e and f, and the accessory subunits ATP6AP1/Ac45 and ATP6AP2/PRR. Interacts with SPAAR. Predominantly expressed in neurons in the cortex and in the dentate gyrus, CA1 and CA3 regions of the hippocampus (at protein level). Expressed at lower levels in astrocytes, oligodendrocytes and microglia (at protein level). In the cerebellum, present in Purkinje and granule cells (at protein level).

The protein localises to the cytoplasmic vesicle. It is found in the clathrin-coated vesicle membrane. It localises to the secretory vesicle. Its subcellular location is the synaptic vesicle membrane. The protein resides in the melanosome. Its function is as follows. Subunit of the V0 complex of vacuolar(H+)-ATPase (V-ATPase), a multisubunit enzyme composed of a peripheral complex (V1) that hydrolyzes ATP and a membrane integral complex (V0) that translocates protons. V-ATPase is responsible for the acidification of various organelles, such as lysosomes, endosomes, the trans-Golgi network, and secretory granules, including synaptic vesicles. In certain cell types, can be exported to the plasma membrane, where it is involved in the acidification of the extracellular environment. Required for assembly and activity of the vacuolar ATPase. Through its action on compartment acidification, plays an essential role in neuronal development in terms of integrity and connectivity of neurons. This is V-type proton ATPase 116 kDa subunit a 1 (Atp6v0a1) from Mus musculus (Mouse).